The sequence spans 869 residues: Rho GTPase-activating protein 27 (869 aa).

Residues glutamate 6–alanine 69 form the SH3 domain. The disordered stretch occupies residues glycine 104 to glycine 137. 3 positions are modified to phosphoserine: serine 155, serine 215, and serine 249. 2 consecutive WW domains span residues proline 246–glutamate 280 and glutamate 299–glutamate 333. Disordered stretches follow at residues tryptophan 275–glutamate 299, glutamate 331–proline 389, and valine 447–lysine 474. Over residues glutamate 331–leucine 343 the composition is skewed to acidic residues. Polar residues predominate over residues methionine 345 to glutamine 356. Residue serine 350 is modified to Phosphoserine. Residues glutamine 414 to valine 447 enclose the WW 3 domain. Phosphoserine is present on residues serine 459 and serine 462. Threonine 464 bears the Phosphothreonine mark. Serine 469 bears the Phosphoserine mark. The PH domain maps to threonine 477–glutamate 593. A disordered region spans residues aspartate 598–leucine 644. Residues alanine 631 to serine 642 show a composition bias toward polar residues. Serine 632 bears the Phosphoserine mark. Residues cysteine 677 to phenylalanine 866 enclose the Rho-GAP domain.

In terms of assembly, interacts with SH3KBP1/CIN85.

Its subcellular location is the cytoplasm. The protein localises to the membrane. Rho GTPase-activating protein which may be involved in clathrin-mediated endocytosis. GTPase activators for the Rho-type GTPases act by converting them to an inactive GDP-bound state. Has activity toward CDC42 and RAC1. This is Rho GTPase-activating protein 27 (Arhgap27) from Rattus norvegicus (Rat).